The sequence spans 354 residues: Phosphatidylserine decarboxylase proenzyme (354 aa).

Residues 18-36 traverse the membrane as a helical segment; it reads YLITGVTILSFILMFQYKY. Residues aspartate 139, histidine 198, and serine 308 each act as charge relay system; for autoendoproteolytic cleavage activity in the active site. Catalysis depends on serine 308, which acts as the Schiff-base intermediate with substrate; via pyruvic acid; for decarboxylase activity. The residue at position 308 (serine 308) is a Pyruvic acid (Ser); by autocatalysis.

Belongs to the phosphatidylserine decarboxylase family. PSD-B subfamily. Eukaryotic type I sub-subfamily. Heterodimer of a large membrane-associated beta subunit and a small pyruvoyl-containing alpha subunit. Pyruvate serves as cofactor. Post-translationally, is synthesized initially as an inactive proenzyme. Formation of the active enzyme involves a self-maturation process in which the active site pyruvoyl group is generated from an internal serine residue via an autocatalytic post-translational modification. Two non-identical subunits are generated from the proenzyme in this reaction, and the pyruvate is formed at the N-terminus of the alpha chain, which is derived from the carboxyl end of the proenzyme. The autoendoproteolytic cleavage occurs by a canonical serine protease mechanism, in which the side chain hydroxyl group of the serine supplies its oxygen atom to form the C-terminus of the beta chain, while the remainder of the serine residue undergoes an oxidative deamination to produce ammonia and the pyruvoyl prosthetic group on the alpha chain. During this reaction, the Ser that is part of the protease active site of the proenzyme becomes the pyruvoyl prosthetic group, which constitutes an essential element of the active site of the mature decarboxylase.

The protein resides in the membrane. The protein localises to the endoplasmic reticulum membrane. The enzyme catalyses a 1,2-diacyl-sn-glycero-3-phospho-L-serine + H(+) = a 1,2-diacyl-sn-glycero-3-phosphoethanolamine + CO2. The protein operates within phospholipid metabolism; phosphatidylethanolamine biosynthesis; phosphatidylethanolamine from CDP-diacylglycerol: step 2/2. With respect to regulation, protease activity is inhibited by PMSF. Its function is as follows. Catalyzes the formation of phosphatidylethanolamine (PtdEtn) from phosphatidylserine (PtdSer). Plays a central role in phospholipid metabolism and in the interorganelle trafficking of phosphatidylserine. This Plasmodium knowlesi (strain H) protein is Phosphatidylserine decarboxylase proenzyme.